The primary structure comprises 138 residues: ATP synthase epsilon chain (138 aa).

Basic and acidic residues predominate over residues 89–114 (KDTAQQEWNEAQKRLDEASKSGDRQK). The interval 89-117 (KDTAQQEWNEAQKRLDEASKSGDRQKQIQ) is disordered.

It belongs to the ATPase epsilon chain family. F-type ATPases have 2 components, CF(1) - the catalytic core - and CF(0) - the membrane proton channel. CF(1) has five subunits: alpha(3), beta(3), gamma(1), delta(1), epsilon(1). CF(0) has three main subunits: a, b and c.

Its subcellular location is the cellular thylakoid membrane. In terms of biological role, produces ATP from ADP in the presence of a proton gradient across the membrane. The polypeptide is ATP synthase epsilon chain (Gloeothece citriformis (strain PCC 7424) (Cyanothece sp. (strain PCC 7424))).